The chain runs to 329 residues: DNA-directed RNA polymerase subunit alpha (329 aa).

The alpha N-terminal domain (alpha-NTD) stretch occupies residues 1 to 232; the sequence is MQEMLEQLLT…YQLIAFVDLK (232 aa). Residues 246-329 are alpha C-terminal domain (alpha-CTD); it reads FDPIFLQPVD…PSSLVSKESA (84 aa).

This sequence belongs to the RNA polymerase alpha chain family. Homodimer. The RNAP catalytic core consists of 2 alpha, 1 beta, 1 beta' and 1 omega subunit. When a sigma factor is associated with the core the holoenzyme is formed, which can initiate transcription.

It carries out the reaction RNA(n) + a ribonucleoside 5'-triphosphate = RNA(n+1) + diphosphate. DNA-dependent RNA polymerase catalyzes the transcription of DNA into RNA using the four ribonucleoside triphosphates as substrates. This chain is DNA-directed RNA polymerase subunit alpha, found in Hydrogenovibrio crunogenus (strain DSM 25203 / XCL-2) (Thiomicrospira crunogena).